A 250-amino-acid chain; its full sequence is 2,3-bisphosphoglycerate-dependent phosphoglycerate mutase (250 aa).

Substrate is bound by residues 10–17 (RHGESQWN), 23–24 (TG), R62, 89–92 (ERHY), K100, 116–117 (RR), and 185–186 (GN). H11 serves as the catalytic Tele-phosphohistidine intermediate. E89 serves as the catalytic Proton donor/acceptor.

Belongs to the phosphoglycerate mutase family. BPG-dependent PGAM subfamily. As to quaternary structure, homodimer.

The enzyme catalyses (2R)-2-phosphoglycerate = (2R)-3-phosphoglycerate. The protein operates within carbohydrate degradation; glycolysis; pyruvate from D-glyceraldehyde 3-phosphate: step 3/5. Catalyzes the interconversion of 2-phosphoglycerate and 3-phosphoglycerate. This is 2,3-bisphosphoglycerate-dependent phosphoglycerate mutase from Citrobacter koseri (strain ATCC BAA-895 / CDC 4225-83 / SGSC4696).